The following is a 42-amino-acid chain: Conodipine-M beta chain (42 aa).

Heterodimer of an alpha and a beta chains; probably disulfide-linked. In terms of tissue distribution, expressed by the venom duct.

It is found in the secreted. In terms of biological role, heterodimer: conodipine-M catalyzes the calcium-dependent hydrolysis of the 2-acyl groups in 3-sn-phosphoglycerides. This activity may be supported by the alpha chain. Conodipine-M inhibits the binding of isradipine (a ligand specific for L-type calcium channel) to L-type calcium channels. The polypeptide is Conodipine-M beta chain (Conus magus (Magical cone)).